The sequence spans 228 residues: Protein N-lysine methyltransferase METTL21D (228 aa).

Ala-2 is modified (N-acetylalanine). S-adenosyl-L-methionine contacts are provided by residues Trp-43, 75-77 (GSG), Asp-96, Trp-126, Ala-142, and Tyr-147.

The protein belongs to the methyltransferase superfamily. METTL21 family. As to quaternary structure, interacts with ALKBH6. Interacts with ASPSCR1 and UBXN6; interaction with ASPSCR1, but not with UBXN6, enhances VCP methylation. Widely expressed.

It is found in the cytoplasm. The enzyme catalyses L-lysyl-[protein] + 3 S-adenosyl-L-methionine = N(6),N(6),N(6)-trimethyl-L-lysyl-[protein] + 3 S-adenosyl-L-homocysteine + 3 H(+). Its function is as follows. Protein N-lysine methyltransferase that specifically trimethylates 'Lys-315' of VCP/p97; this modification may decrease VCP ATPase activity. The polypeptide is Protein N-lysine methyltransferase METTL21D (Vcpkmt) (Mus musculus (Mouse)).